Here is a 158-residue protein sequence, read N- to C-terminus: Putative 8-oxo-dGTP diphosphatase YtkD (158 aa).

One can recognise a Nudix hydrolase domain in the interval 6–145; sequence DYYQNTVQLS…SFIMKDSVLP (140 aa). The short motif at 53-74 is the Nudix box element; it reads GKVEPMECAEEAALREVKEETG. Mg(2+) contacts are provided by Glu68 and Glu72.

This sequence belongs to the Nudix hydrolase family. Requires Mg(2+) as cofactor.

It catalyses the reaction 8-oxo-dGTP + H2O = 8-oxo-dGMP + diphosphate + H(+). With respect to regulation, not induced by oxidative damage (following treatment with paraquat or hydrogen peroxide). Not induced by mitomycin C. Not induced by sigma-B general stress inducers such as sodium chloride, ethanol or heat. Functionally, involved in the GO system responsible for removing an oxidatively damaged form of guanine (7,8-dihydro-8-oxoguanine, 8-oxo-dGTP) from DNA and the nucleotide pool. 8-oxo-dGTP is inserted opposite dA and dC residues of template DNA with almost equal efficiency thus leading to A.T to G.C transversions. Functions, in conjunction with MutT, to protect vegetatively growing cells from DNA-damaging agents such as H(2)O(2) or t-BHP (t-butylhydroperoxide). The 2 proteins do not however protect spores. According to PubMed:15576788, phosphohydrolase that catalyzes the hydrolysis of all common nucleoside triphosphates as well as of the mutagenic analog 8-oxo-dGTP. The high catalytic efficiency on dGTP is in contrast to results from PubMed:14761999. According to PubMed:14761999, catalyzes the hydrolysis of 8-oxo-dGTP with a specific activity 413 times higher than that exhibited against dGTP. Preferentially catalyzes the hydrolysis of 8-oxo-dGTP and 8-oxo-GTP. According to PubMed:15576788, hydrolyzes nucleoside triphosphates in a stepwise fashion through the diphosphate to the monophosphate, releasing two molecules of inorganic orthophosphate. This chain is Putative 8-oxo-dGTP diphosphatase YtkD (ytkD), found in Bacillus subtilis (strain 168).